Consider the following 362-residue polypeptide: MSSSSSMDLLMCLLLLISPVVLAKSSSTVPAIFTFGDSIFDAGNNHYNKNCTAQADFPPYGSSFFHRPTGRFTNGRTVADFISEFVGLPLQKPFLELQIQILNGTSNFSNGINFASAGSGLLLDTNKFMGVTPIQTQLQQFQTLVEQNLIEKSIIQESLFLLETGSNDIFNYFLPFRAPTLSPDAYVNAMLDQVNKTIDQIYKLGARRIAFFSLGPVGCVPARAMLPNAPTNKCFGKMNVMAKMYNKRLEDIVNIIPTKYPGAIAVFGAVYGITHRFQTYPARYGFSDVSNACCGNGTLGGLMQCGREGYKICNNPNEFLFWDFYHPTEHTYRLMSKALWNGNKNHIRPFNLMALATNKITF.

Positions 1-23 (MSSSSSMDLLMCLLLLISPVVLA) are cleaved as a signal peptide. Residue serine 38 is the Nucleophile of the active site. N-linked (GlcNAc...) asparagine glycosylation is found at asparagine 50, asparagine 103, asparagine 107, asparagine 195, and asparagine 296. Residues aspartate 323 and histidine 326 contribute to the active site.

This sequence belongs to the 'GDSL' lipolytic enzyme family.

It is found in the secreted. This is GDSL esterase/lipase 6 (GLIP6) from Arabidopsis thaliana (Mouse-ear cress).